Consider the following 295-residue polypeptide: Multistep phosphorelay regulator 1 (295 aa).

The tract at residues 89-110 (KSENNQQLAANETAGAPEGTEE) is disordered. Over residues 97-106 (AANETAGAPE) the composition is skewed to low complexity. Residues 182 to 284 (EHEFSKSIVW…NDFYKDARAY (103 aa)) form the HPt domain. His-221 carries the post-translational modification Phosphohistidine.

Functionally, binds to the msc4 response regulator which is part of a multistep phosphorelay system that transmits oxidative stress signals to the spc1 MAPK cascade. The protein is Multistep phosphorelay regulator 1 (mpr1) of Schizosaccharomyces pombe (strain 972 / ATCC 24843) (Fission yeast).